The primary structure comprises 310 residues: HPr kinase/phosphorylase (310 aa).

Catalysis depends on residues His138 and Lys159. 153–160 is an ATP binding site; that stretch reads GGSGVGKS. Ser160 serves as a coordination point for Mg(2+). The Proton acceptor; for phosphorylation activity. Proton donor; for dephosphorylation activity role is filled by Asp177. The important for the catalytic mechanism of both phosphorylation and dephosphorylation stretch occupies residues 201-210; it reads LEIRGLGIIN. Residue Glu202 coordinates Mg(2+). Residue Arg243 is part of the active site. The tract at residues 264 to 269 is important for the catalytic mechanism of dephosphorylation; it reads PVRPGR.

Belongs to the HPrK/P family. As to quaternary structure, homohexamer. Mg(2+) serves as cofactor.

The enzyme catalyses [HPr protein]-L-serine + ATP = [HPr protein]-O-phospho-L-serine + ADP + H(+). It catalyses the reaction [HPr protein]-O-phospho-L-serine + phosphate + H(+) = [HPr protein]-L-serine + diphosphate. Functionally, catalyzes the ATP- as well as the pyrophosphate-dependent phosphorylation of a specific serine residue in HPr, a phosphocarrier protein of the phosphoenolpyruvate-dependent sugar phosphotransferase system (PTS). HprK/P also catalyzes the pyrophosphate-producing, inorganic phosphate-dependent dephosphorylation (phosphorolysis) of seryl-phosphorylated HPr (P-Ser-HPr). The two antagonistic activities of HprK/P are regulated by several intracellular metabolites, which change their concentration in response to the absence or presence of rapidly metabolisable carbon sources (glucose, fructose, etc.) in the growth medium. Also phosphorylates/dephosphorylates the HPr-like catabolite repression protein crh on a specific serine residue. Therefore, by controlling the phosphorylation state of HPr and crh, HPrK/P is a sensor enzyme that plays a major role in the regulation of carbon metabolism and sugar transport: it mediates carbon catabolite repression (CCR), and regulates PTS-catalyzed carbohydrate uptake and inducer exclusion. This Shouchella clausii (strain KSM-K16) (Alkalihalobacillus clausii) protein is HPr kinase/phosphorylase.